A 377-amino-acid chain; its full sequence is 2-aminoethylphosphonate--pyruvate transaminase (377 aa).

Lys-194 is modified (N6-(pyridoxal phosphate)lysine).

Belongs to the class-V pyridoxal-phosphate-dependent aminotransferase family. PhnW subfamily. As to quaternary structure, homodimer. Pyridoxal 5'-phosphate is required as a cofactor.

It carries out the reaction (2-aminoethyl)phosphonate + pyruvate = phosphonoacetaldehyde + L-alanine. In terms of biological role, involved in phosphonate degradation. The protein is 2-aminoethylphosphonate--pyruvate transaminase of Cupriavidus necator (strain ATCC 17699 / DSM 428 / KCTC 22496 / NCIMB 10442 / H16 / Stanier 337) (Ralstonia eutropha).